Reading from the N-terminus, the 291-residue chain is Phosphatidylglycerol--prolipoprotein diacylglyceryl transferase (291 aa).

The next 7 membrane-spanning stretches (helical) occupy residues valine 21–alanine 41, leucine 60–tyrosine 80, tryptophan 96–phenylalanine 116, phenylalanine 130–glycine 150, serine 198–isoleucine 218, glycine 225–phenylalanine 245, and isoleucine 260–tryptophan 280. Arginine 143 lines the a 1,2-diacyl-sn-glycero-3-phospho-(1'-sn-glycerol) pocket.

The protein belongs to the Lgt family.

The protein localises to the cell inner membrane. It catalyses the reaction L-cysteinyl-[prolipoprotein] + a 1,2-diacyl-sn-glycero-3-phospho-(1'-sn-glycerol) = an S-1,2-diacyl-sn-glyceryl-L-cysteinyl-[prolipoprotein] + sn-glycerol 1-phosphate + H(+). It participates in protein modification; lipoprotein biosynthesis (diacylglyceryl transfer). Its function is as follows. Catalyzes the transfer of the diacylglyceryl group from phosphatidylglycerol to the sulfhydryl group of the N-terminal cysteine of a prolipoprotein, the first step in the formation of mature lipoproteins. The sequence is that of Phosphatidylglycerol--prolipoprotein diacylglyceryl transferase from Cronobacter sakazakii (strain ATCC BAA-894) (Enterobacter sakazakii).